The chain runs to 44 residues: Small ribosomal subunit protein eS31 (44 aa).

Residues C18, C21, C35, and C38 each contribute to the Zn(2+) site. Residues 18–38 (CPRCGDTVLAEHEDRQHCGKC) form a C4-type zinc finger.

This sequence belongs to the eukaryotic ribosomal protein eS31 family. As to quaternary structure, part of the 30S ribosomal subunit. Zn(2+) is required as a cofactor.

This is Small ribosomal subunit protein eS31 from Haloarcula marismortui (strain ATCC 43049 / DSM 3752 / JCM 8966 / VKM B-1809) (Halobacterium marismortui).